A 655-amino-acid polypeptide reads, in one-letter code: MGRRRAPGGGSLGRVLIRHQTQRSRSHRHTDSWLHTSELNDGYDWGRLNLQSVTEQSSLEDFLATAELAGTEFVAEKLNIKFVPPEARTGLLSFEESQRIKRLHEENRQFLCIPRRPNWDRKTSPEELKQAEKDNFLKWRRQLVRLEEEQKLILTPFERNLDFWRQLWRVIERSDIVVQIVDARNPLLFRCEDLECYVKEIDAAKENVILINKADLLTAEQRVAWAVHFEKEGVKVIFWSALAETVHLNGDSKDEVNSVAGEANSSESEDSSLDGNEIPHRDLFLLSEESESDDDDSEYEDCQEDEEEDWQTCSEEDSNPEEGQEEGGCDRDQKEHGPEDSEAQSRASPENSQMSNKSHLVSKQELLELFKKLHTGKKVKDGQLTVGLVGYPNVGKSSTINTIMGNKKVSVSATPGHTKHFQTLYVEPGLCLCDCPGLVMPSFVSTKAEMICSGILPIDQMRDHVPPVSLVCQNIPRRVLEATYGINIIKPGEDEDPYRPPTSEELLTAYGCMRGFMTAHGQPDQPRSARYILKDYVRGKLLYCHPPPGKDPVAFQHQHRQLLENKIKGEELRLQPGKTQKAKQVENVVDKTFFHQENVRALTKGVQAVMGYKPGSGLVTAAAASAENVPGKPWKKHGNRNKKEKSRRLYRHLDV.

Residues 1–31 form a disordered region; it reads MGRRRAPGGGSLGRVLIRHQTQRSRSHRHTD. Positions 16–28 are enriched in basic residues; the sequence is LIRHQTQRSRSHR. 2 positions are modified to phosphoserine: serine 93 and serine 97. In terms of domain architecture, CP-type G spans 164 to 441; sequence WRQLWRVIER…LCDCPGLVMP (278 aa). 212-215 provides a ligand contact to GTP; sequence NKAD. At serine 252 the chain carries Phosphoserine. Residues 253–359 form a disordered region; it reads KDEVNSVAGE…ENSQMSNKSH (107 aa). Residues 288–327 are compositionally biased toward acidic residues; it reads EESESDDDDSEYEDCQEDEEEDWQTCSEEDSNPEEGQEEG. The span at 328–339 shows a compositional bias: basic and acidic residues; sequence GCDRDQKEHGPE. Residues 344-359 show a composition bias toward polar residues; sequence QSRASPENSQMSNKSH. Residues 390 to 397 and 434 to 437 contribute to the GTP site; these read GYPNVGKS and DCPG. Positions 625-655 are disordered; it reads SAENVPGKPWKKHGNRNKKEKSRRLYRHLDV. The segment covering 633-655 has biased composition (basic residues); it reads PWKKHGNRNKKEKSRRLYRHLDV.

It belongs to the TRAFAC class YlqF/YawG GTPase family. LSG1 subfamily.

The protein resides in the cytoplasm. It localises to the endoplasmic reticulum. The protein localises to the nucleus. It is found in the cajal body. It carries out the reaction GTP + H2O = GDP + phosphate + H(+). Functionally, functions as a GTPase. May act by mediating the release of NMD3 from the 60S ribosomal subunit after export into the cytoplasm during the 60S ribosomal subunit maturation. The protein is Large subunit GTPase 1 homolog of Rattus norvegicus (Rat).